Consider the following 288-residue polypeptide: Zinc finger protein ZAT9 (288 aa).

Residues 4–26 form a C2H2-type 1 zinc finger; sequence YKCRVCFKSFVNGKALGGHMRSH. 3 disordered regions span residues 20 to 82, 101 to 123, and 189 to 210; these read GGHM…LTRK, SQLG…DTTT, and GGHR…QRSE. A compositionally biased stretch (polar residues) spans 37 to 52; the sequence is PSQLSYETESDVSSSD. 2 C2H2-type zinc fingers span residues 173–195 and 224–246; these read YKCE…RASH and HECP…KRSH.

The protein localises to the nucleus. Probable transcription factor that may be involved in stress responses. This chain is Zinc finger protein ZAT9 (ZAT9), found in Arabidopsis thaliana (Mouse-ear cress).